The following is a 705-amino-acid chain: MDKEKLEKEVIKLLSKKKKPLHFLQIAKALGLGKKERKTLKKVMRKLKKEGKVKVVKGKYEYTGEEVVTGTVIAYPGGFGFLEVEGGKDIYIPPFEMVKVFHGDVVKAKVTEFKGKKEVRIIKVLKRAKKDIVAKVVFEDEQCYVVPLDENAHHRILLSKKDCQKLKEGEVVVLKITQFPTKKSPARGKVIEVLGNPKEKFIAIDVIIRKYNLPTSYPEKVIKEVEAIPEEIPEEEIKRRRDLREQLCFTIDPEKAGDFDDAVAIELTPEGYYKLYVHIADVSYYVREGTETDKEAYKRGFTYYFPDRALHMLPEKLSAKLCSLRPNEDKLAFTVEMVFDESGNLKAYDIYESVIRSKARLTYNEALALIVGDPALEKKFPNLVEPLRMMETLYRILSRKRWEMGSIDFDLPEAEVIVDEYGEPTAIYPYERHVAHRIIEHFMISANETVALHLEHAGYPCLYRVHEPPDEEKVENLLEILEGLGYKVKRPHEYTPKFFQKIIEDFEGRPEENLVRFLTLRAMARAKYSPHNVGHFGLALEHYAHFTSPIRRYPDIIVHRLLKKALRGEEIDYEKTLAYLEEAGNHLSKQERIADEAEMEAIDYLKARYMKGRIGEEFIGIITGVVAFGFFVELEENLVEGLVKINTLTDDEYVFDEPAHRLVGVRTGKVFRLGDHVKVRCIAVDEERARVEFELIEKLEKHETL.

In terms of domain architecture, RNB spans 240-567 (RRDLREQLCF…VHRLLKKALR (328 aa)). The S1 motif domain maps to 615–696 (GEEFIGIITG…ERARVEFELI (82 aa)).

Belongs to the RNR ribonuclease family. RNase R subfamily.

The protein localises to the cytoplasm. It carries out the reaction Exonucleolytic cleavage in the 3'- to 5'-direction to yield nucleoside 5'-phosphates.. 3'-5' exoribonuclease that releases 5'-nucleoside monophosphates and is involved in maturation of structured RNAs. The polypeptide is Ribonuclease R (Aquifex aeolicus (strain VF5)).